We begin with the raw amino-acid sequence, 373 residues long: Indole glucosinolate O-methyltransferase 3 (373 aa).

Residues G217, D240, D260, M261, and K274 each coordinate S-adenosyl-L-homocysteine. H278 functions as the Proton acceptor in the catalytic mechanism.

It belongs to the class I-like SAM-binding methyltransferase superfamily. Cation-independent O-methyltransferase family.

The protein operates within secondary metabolite biosynthesis. Functionally, involved in indole glucosinolate biosynthesis. Catalyzes methoxylation reactions of the glucosinolate indole ring. Converts the hydroxy intermediates 4-hydroxy-indol-3-yl-methylglucosinolate (4OH-I3M) and 1-hydroxy-indol-3-yl-methylglucosinolate (1OH-I3M) to 4-methoxy-indol-3-yl-methylglucosinolate (4MO-I3M) and 1-methoxy-indol-3-yl-methylglucosinolate(1MO-I3M), respectively. The chain is Indole glucosinolate O-methyltransferase 3 from Arabidopsis thaliana (Mouse-ear cress).